Reading from the N-terminus, the 219-residue chain is MTLSRVHQQLITFPAVKTSPAGYLPDPASINKLQIPTSSKFSFLTGKGKSMLRKKKNDSFTNGVRDQDKLGPKLTETVKRKLSLGARILQMGGLEKIYKRLFKVSDEEKLFKAYQCYLSTTAGPIAGLLFISSKKIAFCSERSIKVASPQGELNRVHYKVSIPLCKINGVNQSQNTTKPSQKYLEVVTVDGFDFWFMGFLSYQKAFNCLEQALSLSFKQ.

Residues K96–Q174 enclose the GRAM domain.

This sequence belongs to the GEM family.

This chain is Putative GEM-like protein 8, found in Arabidopsis thaliana (Mouse-ear cress).